The following is a 957-amino-acid chain: Glycine dehydrogenase (decarboxylating) (957 aa).

Position 702 is an N6-(pyridoxal phosphate)lysine (lysine 702).

This sequence belongs to the GcvP family. The glycine cleavage system is composed of four proteins: P, T, L and H. Pyridoxal 5'-phosphate serves as cofactor.

The enzyme catalyses N(6)-[(R)-lipoyl]-L-lysyl-[glycine-cleavage complex H protein] + glycine + H(+) = N(6)-[(R)-S(8)-aminomethyldihydrolipoyl]-L-lysyl-[glycine-cleavage complex H protein] + CO2. The glycine cleavage system catalyzes the degradation of glycine. The P protein binds the alpha-amino group of glycine through its pyridoxal phosphate cofactor; CO(2) is released and the remaining methylamine moiety is then transferred to the lipoamide cofactor of the H protein. The protein is Glycine dehydrogenase (decarboxylating) of Bradyrhizobium sp. (strain ORS 278).